Consider the following 473-residue polypeptide: Phosphatidylserine synthase 1 (473 aa).

N-acetylalanine is present on alanine 2. Over 2-35 (ASCVGSRTLSKDDVNYKMHFRMINEQQVEDITID) the chain is Cytoplasmic. A helical membrane pass occupies residues 36–56 (FFYRPHTITLLSFTIVSLMYF). The Lumenal segment spans residues 57 to 72 (AFTRDDSVPEDNIWRG). The helical transmembrane segment at 73–93 (ILSVIFFFLIISVLAFPNGPF) threads the bilayer. Residues 94–102 (TRPHPALWR) lie on the Cytoplasmic side of the membrane. Residues 103–123 (MVFGLSVLYFLFLVFLLFLNF) traverse the membrane as a helical segment. Topologically, residues 124 to 186 (EQVKSLMYWL…AMKALLIRSY (63 aa)) are lumenal. The chain crosses the membrane as a helical span at residues 187 to 207 (GLCWTISITWELTELFFMHLL). Residues 208-216 (PNFAECWWD) lie on the Cytoplasmic side of the membrane. A helical membrane pass occupies residues 217-237 (QVILDILLCNGGGIWLGMVVC). The Lumenal portion of the chain corresponds to 238–286 (RFLEMRTYHWASFKDIHTTTGKIKRAVLQFTPASWTYVRWFDPKSSFQR). Residues 287 to 307 (VAGIYLFMIIWQLTELNTFFL) traverse the membrane as a helical segment. Topologically, residues 308–319 (KHIFVFQASHPL) are cytoplasmic. A helical transmembrane segment spans residues 320-342 (SWCRILFIGGITAPTVRQYYAYL). Topologically, residues 343–355 (TDTQCKRVGTQCW) are lumenal. A helical transmembrane segment spans residues 356–376 (VFGVIGFLEAIVCIKFGQDLF). The Cytoplasmic portion of the chain corresponds to 377 to 383 (SKTQILY). Residues 384-404 (VVLWLLCVAFTTFLCLYGMVW) traverse the membrane as a helical segment. Residues 405-473 (YAEHYGHREK…SKVTNGVGKK (69 aa)) are Lumenal-facing. Serine 417, serine 425, and serine 454 each carry phosphoserine. Residues 427–473 (DISWPHGKGSKGSEDGPHKHPGNSESHSSRRRNRHSKSKVTNGVGKK) form a disordered region. The segment covering 455 to 464 (SRRRNRHSKS) has biased composition (basic residues).

Belongs to the phosphatidyl serine synthase family.

It localises to the endoplasmic reticulum membrane. The enzyme catalyses a 1,2-diacyl-sn-glycero-3-phosphoethanolamine + L-serine = a 1,2-diacyl-sn-glycero-3-phospho-L-serine + ethanolamine. The catalysed reaction is a 1,2-diacyl-sn-glycero-3-phosphocholine + L-serine = a 1,2-diacyl-sn-glycero-3-phospho-L-serine + choline. Its pathway is phospholipid metabolism; phosphatidylserine biosynthesis. Functionally, catalyzes a base-exchange reaction in which the polar head group of phosphatidylethanolamine (PE) or phosphatidylcholine (PC) is replaced by L-serine. Catalyzes mainly the conversion of phosphatidylcholine but also converts, in vitro and to a lesser extent, phosphatidylethanolamine. The polypeptide is Phosphatidylserine synthase 1 (PTDSS1) (Bos taurus (Bovine)).